We begin with the raw amino-acid sequence, 394 residues long: MSRSAAEFLKPQNVASTHYLDNRVYWDHEIFEEEKKRIFSKVWKFVCHVSEIPSTFDYRTIKVADTPLVVIRGKDEKVRTFVNACSHRGIQIVRRPRGNAKTMECIFHRWNYDSTNGELTGAPRKEAYGPSNFDLKQCGLREVRTETYLGLVFVNLDDSAVSLSEFIGDALEMEKDILGAEELEVFDYYEQVLDTNWKNWQETNLDLYHEFMHFANRKTGLTVKEYYQRAWKLYPNGHAAIERYRAQYSNYAGWQDRDDGIRLPGLHPNEFQLVNLFPDLAINARGTVIRIDSQTPISPGKTLVQYRGLGLKRDSERERVQRVRDYTSIWGPFGTNLAEDTLATSLHAKTIQTGSVPFTYLTRDEGGMTQDDLGLRTFYREWERLMSRQANQIR.

Positions 43–154 constitute a Rieske domain; sequence WKFVCHVSEI…TETYLGLVFV (112 aa). The [2Fe-2S] cluster site is built by Cys-85, His-87, Cys-105, and His-108. Fe cation is bound by residues His-209 and His-213.

It belongs to the bacterial ring-hydroxylating dioxygenase alpha subunit family. As to quaternary structure, heterotetramer with a alpha2beta2 structure. [2Fe-2S] cluster serves as cofactor. The cofactor is Fe cation.

The enzyme catalyses 2-aminobenzenesulfonate + NADH + O2 + 2 H(+) = 2,3-dihydroxybenzenesulfonate + NH4(+) + NAD(+). With respect to regulation, inhibited by o-phenanthroline. Functionally, alpha subunit of the oxygenase component of the 2-aminobenzenesulfonate 2,3-dioxygenase system (deaminating) (ABSDOS). Can use 2-aminobenzenesulfonate (ABS), benzenesulfonate (BS), 4-toluenesulfonate (TS), 2-nitrobenzenesulfonate, 3- and 4-aminobenzenesulfonates, 4-chloro- and 4-hydroxybenzenesulfonates and pyridine-3-sulfonate as substrates. No desulfonation of ABS to aminocatechol or aminophenol detected. In Alcaligenes sp, this protein is 2-aminobenzenesulfonate 2,3-dioxygenase subunit alpha.